Consider the following 628-residue polypeptide: Kelch-like protein 14 (628 aa).

In terms of domain architecture, BTB spans 33–151 (CDVTLTAQGQ…LYTANVTLSL (119 aa)). Residues 69–115 (GGGVGGQDGLGAPKDQQQPPQQQPSQQQQPPPQEEPGTPSSSPDDKL) are disordered. Low complexity predominate over residues 84-96 (QQQPPQQQPSQQQ). Residues 210-279 (VEDVLLLNFE…PAPELVERVQ (70 aa)) form the BACK domain. Kelch repeat units lie at residues 323 to 372 (MLLL…EVEN), 373 to 424 (FLFV…RLDK), 425 to 471 (HLYV…VHNG), 473 to 518 (IYIS…VMND), 520 to 570 (LYAI…VLDD), and 572 to 620 (IYLV…TVIL).

In terms of assembly, interacts with TOR1A, preferentially with the ATP-free form.

It is found in the cytoplasm. The protein localises to the cytosol. It localises to the endoplasmic reticulum membrane. The polypeptide is Kelch-like protein 14 (KLHL14) (Homo sapiens (Human)).